Consider the following 496-residue polypeptide: Myotilin (496 aa).

The interval 1–37 is disordered; it reads MFNYERPKHFIQPQNPCGSRLQPPGPEVSGFPSQTKQ. Arg20 carries the post-translational modification Omega-N-methylarginine. Residues 78–149 form a necessary for interaction with ACTN1 region; it reads PNPGQKVTAT…PTPKTPDHEI (72 aa). 2 stretches are compositionally biased toward polar residues: residues 202–213 and 221–233; these read NSDVQDSPQHNP and PTSQ…SSRA. A disordered region spans residues 202-239; sequence NSDVQDSPQHNPEQARLHVPTSQVRSRSSSRAEANDQD. The interval 213–491 is necessary for interaction with FLNC; sequence PEQARLHVPT…QRLAAQSGLY (279 aa). Positions 213-496 are necessary for interaction with ACTA1; sequence PEQARLHVPT…QSGLYESEEL (284 aa). 2 consecutive Ig-like C2-type domains span residues 248–333 and 347–439; these read PRFI…ATFT and PMFI…LDVT.

Belongs to the myotilin/palladin family. As to quaternary structure, homodimer. Interacts with ACTA1, ACTN1, FLNA, FLNB, FLNC, and MYOZ2. Interacts with the C-terminal region of MYOZ1. In terms of tissue distribution, expressed in skeletal muscle (at protein level).

It is found in the cell membrane. The protein resides in the sarcolemma. It localises to the cytoplasm. Its subcellular location is the cytoskeleton. The protein localises to the myofibril. It is found in the sarcomere. The protein resides in the z line. In terms of biological role, component of a complex of multiple actin cross-linking proteins. Involved in the control of myofibril assembly and stability at the Z lines in muscle cells. This is Myotilin (Myot) from Mus musculus (Mouse).